A 129-amino-acid chain; its full sequence is Type II secretion system protein I (129 aa).

Residues 1–6 (MKRARG) constitute a propeptide, leader sequence. The residue at position 7 (Phe-7) is an N-methylphenylalanine. The helical transmembrane segment at 7 to 27 (FTLLEVLVALAIFAMVAASVL) threads the bilayer.

Belongs to the GSP I family. As to quaternary structure, type II secretion is composed of four main components: the outer membrane complex, the inner membrane complex, the cytoplasmic secretion ATPase and the periplasm-spanning pseudopilus. Forms the tip of the type II pseudopilus by interacting with XcpU, XcpW and XcpX. Interacts with core component XcpT. Cleaved by prepilin peptidase. In terms of processing, methylated by prepilin peptidase at the amino group of the N-terminal phenylalanine once the leader sequence is cleaved by prepilin peptidase.

The protein resides in the cell inner membrane. Component of the type II secretion system required for the energy-dependent secretion of extracellular factors such as proteases and toxins from the periplasm. Part of the pseudopilus tip complex that is critical for the recognition and binding of secretion substrates. Type II pseudopilus confers increased bacterial adhesive capabilities. This Pseudomonas aeruginosa (strain ATCC 15692 / DSM 22644 / CIP 104116 / JCM 14847 / LMG 12228 / 1C / PRS 101 / PAO1) protein is Type II secretion system protein I (xcpV).